The following is a 250-amino-acid chain: MNSSYHRRVPVLGELGTSTSSQLPSTWPSILIPLGSTEQHGPHLPLDTDTRIATAVGRAVATRMHGRLTQCQPGWLLAPPIAYGASGEHQSFAGTISIGAEALRVLLLEYGRSAACWADRLVFVNGHGGNVEALRGAVRQLRAEGRDAGWSACGSAGGDAHAGHTETSVLLHISPEVVLTDRLSAGNAAPLAELLPSLRRGGVAAVSPIGVLGDPTTATAVEGRRIFAEMVDDCVSRIARWTPGPDGMLT.

A divalent metal cation-binding residues include Glu38, His40, Asp49, His127, and Glu166.

The protein belongs to the creatininase superfamily. In terms of assembly, homooctamer. The cofactor is Fe(2+). It depends on Zn(2+) as a cofactor.

It catalyses the reaction [mycofactocin precursor peptide]-C-terminal glycyl-N-{5-[(4-hydroxyphenyl)methyl]-4,4-dimethyl-2-oxopyrrolidin-3-yl}acetamide + H2O = [mycofactocin precursor peptide]-C-terminal glycine + 3-amino-5-[(4-hydroxyphenyl)methyl]-4,4-dimethyl-2-pyrrolidin-2-one. Peptidase involved in the biosynthesis of the enzyme cofactor mycofactocin (MFT). Catalyzes cleavage of the MftC-modified MftA peptide to liberate its final two residues, which consist of a cross-linked valine-decarboxylated tyrosine dipeptide (named 3-amino-5-[(4-hydroxyphenyl)methyl]-4,4-dimethyl-2-pyrrolidin-2-one or ADHP). This is Mycofactocin precursor peptide peptidase from Mycobacterium ulcerans (strain Agy99).